The sequence spans 354 residues: uncharacterized protein (354 aa).

The protein belongs to the asfivirus B354L family.

This is an uncharacterized protein from African swine fever virus (isolate Tick/South Africa/Pretoriuskop Pr4/1996) (ASFV).